The chain runs to 255 residues: GTP cyclohydrolase FolE2 (255 aa).

The protein belongs to the GTP cyclohydrolase IV family.

It catalyses the reaction GTP + H2O = 7,8-dihydroneopterin 3'-triphosphate + formate + H(+). It participates in cofactor biosynthesis; 7,8-dihydroneopterin triphosphate biosynthesis; 7,8-dihydroneopterin triphosphate from GTP: step 1/1. Converts GTP to 7,8-dihydroneopterin triphosphate. This chain is GTP cyclohydrolase FolE2, found in Syntrophus aciditrophicus (strain SB).